Reading from the N-terminus, the 252-residue chain is Adenosylcobinamide-GDP ribazoletransferase (252 aa).

Transmembrane regions (helical) follow at residues 29–49, 50–70, 104–124, 129–149, 166–186, and 194–214; these read LYWFPFVGLLLGALLAALGYV, GSLSGWHEFAALLVVLGGIVL, VGSFGALALSGVMLLKWVAVV, FGLFDVVMAGILLARLVQVLL, FVAGAGAPHAFSALLFTLALL, and FPTMLWLLGAALVAGSMVGMV.

The protein belongs to the CobS family. Mg(2+) serves as cofactor.

The protein localises to the cell inner membrane. It catalyses the reaction alpha-ribazole + adenosylcob(III)inamide-GDP = adenosylcob(III)alamin + GMP + H(+). The catalysed reaction is alpha-ribazole 5'-phosphate + adenosylcob(III)inamide-GDP = adenosylcob(III)alamin 5'-phosphate + GMP + H(+). It functions in the pathway cofactor biosynthesis; adenosylcobalamin biosynthesis; adenosylcobalamin from cob(II)yrinate a,c-diamide: step 7/7. Joins adenosylcobinamide-GDP and alpha-ribazole to generate adenosylcobalamin (Ado-cobalamin). Also synthesizes adenosylcobalamin 5'-phosphate from adenosylcobinamide-GDP and alpha-ribazole 5'-phosphate. This is Adenosylcobinamide-GDP ribazoletransferase from Chlorobium chlorochromatii (strain CaD3).